The following is a 305-amino-acid chain: Glycine--tRNA ligase alpha subunit (305 aa).

The protein belongs to the class-II aminoacyl-tRNA synthetase family. Tetramer of two alpha and two beta subunits.

The protein localises to the cytoplasm. It carries out the reaction tRNA(Gly) + glycine + ATP = glycyl-tRNA(Gly) + AMP + diphosphate. This chain is Glycine--tRNA ligase alpha subunit, found in Streptococcus pyogenes serotype M2 (strain MGAS10270).